The primary structure comprises 3176 residues: Large tegument protein deneddylase (3176 aa).

Residues 1-12 show a composition bias toward polar residues; it reads MSNGDWGQSQRP. The interval 1–28 is disordered; the sequence is MSNGDWGQSQRPRGTGPMRGIRTMDVNA. The tract at residues 1–268 is deubiquitination activity; sequence MSNGDWGQSQ…YEANGSGFDL (268 aa). The region spanning 41-258 is the Peptidase C76 domain; it reads LGTASCNQAH…MLEHYGVYDF (218 aa). Residues C61, D193, and H195 contribute to the active site. A disordered region spans residues 319–342; that stretch reads PAARYSPAKTNSPPPSPASAAPAS. 5 consecutive repeat copies span residues 335–339, 340–344, 345–349, 350–354, and 355–359. Residues 335–384 are 10 X 5 AA approximate repeats of P-A-S-A-A; sequence PASAAPASAAPASAAPASAAPASAAQASVAPASVAPASAAPASAAPDSAA. One copy of the 6; approximate repeat lies at 360–364; the sequence is QASVA. A 7; approximate repeat occupies 365–369; the sequence is PASVA. Repeat copies occupy residues 370-374 and 375-379. Over residues 376 to 386 the composition is skewed to low complexity; sequence ASAAPDSAAPA. 6 disordered regions span residues 376–683, 928–950, 1170–1193, 1435–1461, 2610–3008, and 3023–3043; these read ASAA…GSGL, LLSG…SIYR, APIS…TPPL, LMET…RARE, GLVS…PGAR, and TYTV…KMPK. Residues 380–384 form a 10; approximate repeat; the sequence is PDSAA. Pro residues predominate over residues 457–488; it reads PRPPVPPHRPPSAARLPPPVIPIPHQSPPASP. Positions 519 to 546 are enriched in low complexity; it reads AAPSNPEIPLTTPSPSPTAAAAPTATTL. Residues 579–636 are compositionally biased toward pro residues; sequence APSPLLPQQQPPPSAAPAPSPLLPQQQPPPSAARAPSPLPPQQQPLPSATPAPPPAQQ. The tract at residues 581 to 611 is interaction with inner tegument protein; the sequence is SPLLPQQQPPPSAAPAPSPLLPQQQPPPSAA. Low complexity predominate over residues 1170–1182; the sequence is APISPASPSATPA. The segment covering 2619-2630 has biased composition (polar residues); the sequence is SADNTPASSDRL. A compositionally biased stretch (low complexity) spans 2643–2654; the sequence is EGSTTAESEASG. The segment covering 2738 to 2747 has biased composition (pro residues); it reads QPAPQQPPSS. Composition is skewed to polar residues over residues 2761–2772 and 2811–2831; these read SPHSTPSTASGS and SAAS…SSQD. The span at 2839–2854 shows a compositional bias: basic and acidic residues; it reads MQREKKQQGGREEAAE. Low complexity-rich tracts occupy residues 2872 to 2886 and 2901 to 2912; these read APVV…ATPA and APALGSGLAAPA.

Belongs to the herpesviridae large tegument protein family. In terms of assembly, interacts with host CUL1 and CUL4A; these interactions inhibit the E3 ligase activity of cullins. Interacts with inner tegument protein. Interacts with capsid vertex specific component CVC2. Interacts with the major capsid protein/MCP. Interacts with host TRIM25 and YWHAZ.

The protein localises to the virion tegument. It localises to the host cytoplasm. Its subcellular location is the host nucleus. It catalyses the reaction Thiol-dependent hydrolysis of ester, thioester, amide, peptide and isopeptide bonds formed by the C-terminal Gly of ubiquitin (a 76-residue protein attached to proteins as an intracellular targeting signal).. Large tegument protein that plays multiple roles in the viral cycle. During viral entry, remains associated with the capsid while most of the tegument is detached and participates in the capsid transport toward the host nucleus. Plays a role in the routing of the capsid at the nuclear pore complex and subsequent uncoating. Within the host nucleus, acts as a deneddylase and promotes the degradation of nuclear CRLs (cullin-RING ubiquitin ligases) and thereby stabilizes nuclear CRL substrates, while cytoplasmic CRLs remain unaffected. These modifications prevent host cell cycle S-phase progression and create a favorable environment allowing efficient viral genome replication. Participates later in the secondary envelopment of capsids. Indeed, plays a linker role for the association of the outer viral tegument to the capsids together with the inner tegument protein. Counteracts host TLR-mediated NF-kappa-B activation through both MYD88 and TICAM1-dependent pathways by interfering with 'Lys-63'- and 'Lys-48'-linked ubiquitination of signaling intermediates such as TRAF6 and IKBKG. Inhibits type I interferon production by forming a tri-molecular complex with host TRIM25 and 14-3-3 thereby promoting TRIM25 autoubiquitination and sequestration of the ligase into inactive protein aggregates. In turn, host RIGI is recruited to the complex but ubiquitination is severely impaired leading to inhibition of the pathway. Also catalyzes the removal of 'Lys-48'- and 'Lys-63'-linked ubiquitin chains on host TBK1 and STING1 suppressing cGAS-STING signaling in addition to the RIGI-MAVS pathway. Inhibits selective autophagy by deubiquitinating host SQSTM1. In turn, decreased SQSTM1 ubiquitination fails to recruit LC3 to SQSTM1-positive aggregates. In the host nucleus, deubiquitinates topoisomerase II subunits TOP2A and TOP2B thereby stabilizing SUMOylated TOP2 which halts the DNA damage response to TOP2-induced double strand DNA breaks and promotes cell survival. The chain is Large tegument protein deneddylase from Homo sapiens (Human).